The sequence spans 565 residues: NAD-dependent malic enzyme (565 aa).

Y104 acts as the Proton donor in catalysis. Position 157 (R157) interacts with NAD(+). The Proton acceptor role is filled by K175. A divalent metal cation is bound by residues E246, D247, and D270. NAD(+) is bound by residues D270 and N418.

This sequence belongs to the malic enzymes family. As to quaternary structure, homotetramer. Mg(2+) is required as a cofactor. Requires Mn(2+) as cofactor.

It carries out the reaction (S)-malate + NAD(+) = pyruvate + CO2 + NADH. The catalysed reaction is oxaloacetate + H(+) = pyruvate + CO2. The polypeptide is NAD-dependent malic enzyme (Pectobacterium carotovorum subsp. carotovorum (strain PC1)).